Reading from the N-terminus, the 949-residue chain is Sensor histidine kinase RcsC (949 aa).

At 1–19 the chain is on the cytoplasmic side; it reads MKYLASFRTTLKASRYMFR. The helical transmembrane segment at 20-41 threads the bilayer; sequence ALALVLWLLIAFSSVFYIVNAL. Residues 42–313 are Periplasmic-facing; sequence HQRESEIRQE…PVDKVLERIR (272 aa). Residues 314–335 traverse the membrane as a helical segment; the sequence is MVILNAILLNVLAGAALFTLAR. The Cytoplasmic portion of the chain corresponds to 336–949; sequence MYERRIFIPA…AERVRKSRES (614 aa). A PAS domain is found at 357-425; that stretch reads QFNRKIVASA…VLTSNNTNLQ (69 aa). Positions 476–692 constitute a Histidine kinase domain; it reads TVSHELRTPL…QFTVRIPLYG (217 aa). At H479 the chain carries Phosphohistidine; by autocatalysis. Residues 705-805 form the ABL domain; it reads SGKRCWLAVR…ARIYLIEMES (101 aa). Residues 826–940 form the Response regulatory domain; it reads MILVVDDHPI…VIKQTLTVYA (115 aa). D875 carries the post-translational modification 4-aspartylphosphate.

This sequence belongs to the RcsC family. Interacts with RcsD. Post-translationally, autophosphorylated. Activation probably requires a transfer of a phosphate group from a His in the transmitter domain to an Asp in the receiver domain.

The protein resides in the cell inner membrane. The enzyme catalyses ATP + protein L-histidine = ADP + protein N-phospho-L-histidine.. Its function is as follows. Component of the Rcs signaling system, which controls transcription of numerous genes. RcsC functions as a membrane-associated protein kinase that phosphorylates RcsD in response to environmental signals. The phosphoryl group is then transferred to the response regulator RcsB. Involved in regulation of K30 capsular polysaccharide synthesis. This is Sensor histidine kinase RcsC from Escherichia coli.